The following is a 119-amino-acid chain: Large ribosomal subunit protein bL20c (119 aa).

This sequence belongs to the bacterial ribosomal protein bL20 family.

The protein localises to the plastid. Its subcellular location is the chloroplast. Functionally, binds directly to 23S ribosomal RNA and is necessary for the in vitro assembly process of the 50S ribosomal subunit. It is not involved in the protein synthesizing functions of that subunit. The protein is Large ribosomal subunit protein bL20c of Nandina domestica (Heavenly bamboo).